The chain runs to 428 residues: MVNKEDVEDELLNETAPVALDEGDIALLKSYGVGPYSKSIRILEEDIKKMTSKVNELCGIKESDTGIGPPSQWDLVVDKTSAHEEPPLQVARCTKIIDVGKPNAKYIITVKQIAKFVVALGDKLSPTDVEEGIRVGVDRNKYQIQIPLPPKIDASVTMMQVEEKPDITYKDVGGCKEQIEKLREVVEMPLLHPEKFVNLGIDPPKGVLMYGPPGTGKTLCARAVANRTDAAFVRVIGSELVQKYVGEGARMVRDLFQMARSKKACIIFFDEVDAIGGARFDDGAGGDNEVQRTMLELINQLDGFDPRGNIKVLMATNRPDTLDPALLRPGRLDRKVEFGLPDLEGRAHIFTIHAKTMSCARDIRFELLARLCPNSTGADIRSVCTEAGMFAIRARRKVVSEKDFLEAIDKVIKSYAKFSATSRYMHYN.

211–218 (GPPGTGKT) is a binding site for ATP.

This sequence belongs to the AAA ATPase family.

It localises to the cytoplasm. Its subcellular location is the nucleus. Its function is as follows. The 26S proteasome is involved in the ATP-dependent degradation of ubiquitinated proteins. The regulatory (or ATPase) complex confers ATP dependency and substrate specificity to the 26S complex. The sequence is that of 26S proteasome regulatory subunit 7 (psmC2) from Dictyostelium discoideum (Social amoeba).